The chain runs to 190 residues: Peptidyl-tRNA hydrolase (190 aa).

Tyr14 is a tRNA binding site. His19 functions as the Proton acceptor in the catalytic mechanism. TRNA contacts are provided by Tyr64, Asn66, and Asn113.

Belongs to the PTH family. As to quaternary structure, monomer.

Its subcellular location is the cytoplasm. The catalysed reaction is an N-acyl-L-alpha-aminoacyl-tRNA + H2O = an N-acyl-L-amino acid + a tRNA + H(+). Hydrolyzes ribosome-free peptidyl-tRNAs (with 1 or more amino acids incorporated), which drop off the ribosome during protein synthesis, or as a result of ribosome stalling. Functionally, catalyzes the release of premature peptidyl moieties from peptidyl-tRNA molecules trapped in stalled 50S ribosomal subunits, and thus maintains levels of free tRNAs and 50S ribosomes. The polypeptide is Peptidyl-tRNA hydrolase (Gemmatimonas aurantiaca (strain DSM 14586 / JCM 11422 / NBRC 100505 / T-27)).